The following is a 38-amino-acid chain: Potassium channel toxin alpha-KTx 3.3 (38 aa).

3 disulfides stabilise this stretch: Cys-8–Cys-28, Cys-14–Cys-33, and Cys-18–Cys-35. Residues 26–33 (GKCMNRKC) form an interaction with Ca(2+)-activated K(+) channels region.

It belongs to the short scorpion toxin superfamily. Potassium channel inhibitor family. Alpha-KTx 03 subfamily. In terms of tissue distribution, expressed by the venom gland.

Its subcellular location is the secreted. In terms of biological role, potent inhibitor of shaker potassium channels as well as the mammalian homologs of shaker. This is Potassium channel toxin alpha-KTx 3.3 from Leiurus hebraeus (Hebrew deathstalker scorpion).